The following is a 384-amino-acid chain: Tryptophan--tRNA ligase (384 aa).

Positions proline 81 to histidine 89 match the 'HIGH' region motif. Positions lysine 252–serine 256 match the 'KMSKS' region motif.

The protein belongs to the class-I aminoacyl-tRNA synthetase family.

It is found in the cytoplasm. The catalysed reaction is tRNA(Trp) + L-tryptophan + ATP = L-tryptophyl-tRNA(Trp) + AMP + diphosphate + H(+). The polypeptide is Tryptophan--tRNA ligase (Thermococcus kodakarensis (strain ATCC BAA-918 / JCM 12380 / KOD1) (Pyrococcus kodakaraensis (strain KOD1))).